We begin with the raw amino-acid sequence, 173 residues long: Bifunctional protein PyrR (173 aa).

The PRPP-binding motif lies at 93-105 (VILVDDVLYTGRT).

Belongs to the purine/pyrimidine phosphoribosyltransferase family. PyrR subfamily. Homodimer and homohexamer; in equilibrium.

It catalyses the reaction UMP + diphosphate = 5-phospho-alpha-D-ribose 1-diphosphate + uracil. Regulates transcriptional attenuation of the pyrimidine nucleotide (pyr) operon by binding in a uridine-dependent manner to specific sites on pyr mRNA. This disrupts an antiterminator hairpin in the RNA and favors formation of a downstream transcription terminator, leading to a reduced expression of downstream genes. Functionally, also displays a weak uracil phosphoribosyltransferase activity which is not physiologically significant. This chain is Bifunctional protein PyrR, found in Streptococcus thermophilus (strain ATCC BAA-491 / LMD-9).